A 178-amino-acid polypeptide reads, in one-letter code: Peptide methionine sulfoxide reductase MsrA (178 aa).

Cysteine 14 is an active-site residue.

The protein belongs to the MsrA Met sulfoxide reductase family.

It catalyses the reaction L-methionyl-[protein] + [thioredoxin]-disulfide + H2O = L-methionyl-(S)-S-oxide-[protein] + [thioredoxin]-dithiol. It carries out the reaction [thioredoxin]-disulfide + L-methionine + H2O = L-methionine (S)-S-oxide + [thioredoxin]-dithiol. Its function is as follows. Has an important function as a repair enzyme for proteins that have been inactivated by oxidation. Catalyzes the reversible oxidation-reduction of methionine sulfoxide in proteins to methionine. This chain is Peptide methionine sulfoxide reductase MsrA, found in Bacillus pumilus (strain SAFR-032).